The chain runs to 319 residues: Beta-ketoacyl-[acyl-carrier-protein] synthase III (319 aa).

Catalysis depends on residues Cys112 and His246. Residues 247–251 are ACP-binding; it reads QANKR. The active site involves Asn276.

Belongs to the thiolase-like superfamily. FabH family. Homodimer.

Its subcellular location is the cytoplasm. It catalyses the reaction malonyl-[ACP] + acetyl-CoA + H(+) = 3-oxobutanoyl-[ACP] + CO2 + CoA. It functions in the pathway lipid metabolism; fatty acid biosynthesis. Its function is as follows. Catalyzes the condensation reaction of fatty acid synthesis by the addition to an acyl acceptor of two carbons from malonyl-ACP. Catalyzes the first condensation reaction which initiates fatty acid synthesis and may therefore play a role in governing the total rate of fatty acid production. Possesses both acetoacetyl-ACP synthase and acetyl transacylase activities. Its substrate specificity determines the biosynthesis of branched-chain and/or straight-chain of fatty acids. This chain is Beta-ketoacyl-[acyl-carrier-protein] synthase III, found in Psychromonas ingrahamii (strain DSM 17664 / CCUG 51855 / 37).